Here is a 426-residue protein sequence, read N- to C-terminus: Serine--tRNA ligase (426 aa).

Residue 233-235 participates in L-serine binding; that stretch reads TSE. An ATP-binding site is contributed by 264–266; that stretch reads RSE. Glu-287 is a binding site for L-serine. Residue 351–354 participates in ATP binding; the sequence is EISS. Ser-387 contributes to the L-serine binding site.

It belongs to the class-II aminoacyl-tRNA synthetase family. Type-1 seryl-tRNA synthetase subfamily. Homodimer. The tRNA molecule binds across the dimer.

It localises to the cytoplasm. The enzyme catalyses tRNA(Ser) + L-serine + ATP = L-seryl-tRNA(Ser) + AMP + diphosphate + H(+). The catalysed reaction is tRNA(Sec) + L-serine + ATP = L-seryl-tRNA(Sec) + AMP + diphosphate + H(+). It participates in aminoacyl-tRNA biosynthesis; selenocysteinyl-tRNA(Sec) biosynthesis; L-seryl-tRNA(Sec) from L-serine and tRNA(Sec): step 1/1. In terms of biological role, catalyzes the attachment of serine to tRNA(Ser). Is also able to aminoacylate tRNA(Sec) with serine, to form the misacylated tRNA L-seryl-tRNA(Sec), which will be further converted into selenocysteinyl-tRNA(Sec). This Xylella fastidiosa (strain M23) protein is Serine--tRNA ligase.